The sequence spans 120 residues: Protein FAM241B (120 aa).

Positions 12 to 59 (QDDDPRVRTTTQHRSSSSQQGFFNRGHGAPPGGPGPRQQQAGARLGAA) are disordered. 2 stretches are compositionally biased toward low complexity: residues 19–39 (RTTT…RGHG) and 47–59 (PRQQ…LGAA). Ser61 carries the phosphoserine modification. Residues 91 to 111 (ILLLFLLMMLGVRGLLLVGLV) form a helical membrane-spanning segment.

Belongs to the FAM241 family.

Its subcellular location is the membrane. Its function is as follows. May play a role in lysosome homeostasis. The polypeptide is Protein FAM241B (Mus musculus (Mouse)).